A 556-amino-acid polypeptide reads, in one-letter code: Solute carrier family 22 member 20 (556 aa).

Over 1–15 (MAFTDLLDALGGVGR) the chain is Cytoplasmic. A helical membrane pass occupies residues 16-36 (FQLVYTALLLLPCGLLACHTF). At 37–137 (LQNFTAAAPP…LVCEARTLRD (101 aa)) the chain is on the extracellular side. Residues Asn39, Asn54, Asn61, and Asn96 are each glycosylated (N-linked (GlcNAc...) asparagine). The chain crosses the membrane as a helical span at residues 138–158 (LAQSIYMSGVLVGAALFGGLA). Over 159-166 (DRLGRKAP) the chain is Cytoplasmic. The chain crosses the membrane as a helical span at residues 167–187 (LVWSYLQLAVSGAATAYVGSF). Over 188-194 (SAYCVFR) the chain is Extracellular. Residues 195-215 (FLMGMTFSGIILNSLSLVVEW) form a helical membrane-spanning segment. Over 216 to 225 (MPTRGRTVAG) the chain is Cytoplasmic. The chain crosses the membrane as a helical span at residues 226–246 (ILLGFSFTLGQLILAGVAYLI). Residues 247-250 (RPWR) lie on the Extracellular side of the membrane. The chain crosses the membrane as a helical span at residues 251-271 (WLQFAVSAPFLVFFLYSWWLP). Residues 272 to 339 (ESSRWLLLHG…DLFRTPAIRR (68 aa)) are Cytoplasmic-facing. The helical transmembrane segment at 340–360 (VTCCLMGVWFSNSVAYYGLAM) threads the bilayer. Topologically, residues 361-366 (DLQKFG) are extracellular. A helical membrane pass occupies residues 367 to 387 (LSIYLVQALFGIIDIPAMLVA). Residues 388–397 (TTTMIYVGRR) lie on the Cytoplasmic side of the membrane. Residues 398–418 (ATVSSFLILAGLMVIANMFMP) traverse the membrane as a helical segment. At 419–425 (EDLQTLR) the chain is on the extracellular side. Residues 426 to 446 (TVQAALGKGCLASSFICVYLF) form a helical membrane-spanning segment. Topologically, residues 447–457 (TGELYPTEIRQ) are cytoplasmic. A helical transmembrane segment spans residues 458–478 (MGMGFASVNARLGGLVAPLIT). At 479–485 (TLGEISP) the chain is on the extracellular side. Residues 486–506 (VLPPVSFGATSVLAGMAVACF) traverse the membrane as a helical segment. Over 507–556 (LTETRNVPLVETIAAMERRVKQGRSKRDTEQKSEEISLQQLGASPLKETI) the chain is Cytoplasmic. Residues 526 to 541 (VKQGRSKRDTEQKSEE) are compositionally biased toward basic and acidic residues. Residues 526–556 (VKQGRSKRDTEQKSEEISLQQLGASPLKETI) form a disordered region.

Belongs to the major facilitator (TC 2.A.1) superfamily. Organic cation transporter (TC 2.A.1.19) family. As to expression, highly expressed in olfactory mucosa. Weakly expressed in testis. Not detected in heart, spleen, lung, kidney or brain.

The protein localises to the membrane. Organic anion transporter that mediates the uptake of estrone sulfate. Inhibited by probenecid, propionate, 2-methylbutyrate, 3-methylbutyrate, benzoate, heptanoate and 2-ethylhaxanoate. May act as an odorant transporter. This chain is Solute carrier family 22 member 20 (Slc22a20), found in Mus musculus (Mouse).